The following is a 356-amino-acid chain: GATA zinc finger domain-containing protein 17 (356 aa).

Positions 91–119 form a coiled coil; it reads LKEFDALEASLNAELECLELQYSSDTSEL. The segment covering 158–188 has biased composition (low complexity); that stretch reads TASTSTSTPTNTTTTTTTTSNSLTKNNNSAL. The tract at residues 158-294 is disordered; it reads TASTSTSTPT…DITEESKVKE (137 aa). The span at 206 to 228 shows a compositional bias: acidic residues; sequence SSDDEEDDQKDDQDKDDSDEDNV. Residues 260–284 show a composition bias toward low complexity; it reads TAITTTTTPITTTDSNIIGTTTTTD. The segment at 304 to 331 adopts a GATA-type zinc-finger fold; it reads CYVCKVTETPYWRRGTDNGVVVDLCNEC.

This Dictyostelium discoideum (Social amoeba) protein is GATA zinc finger domain-containing protein 17 (gtaQ).